Here is a 564-residue protein sequence, read N- to C-terminus: NAD-dependent malic enzyme (564 aa).

The active-site Proton donor is Tyr102. NAD(+) is bound at residue Arg155. Lys173 functions as the Proton acceptor in the catalytic mechanism. Residues Glu244, Asp245, and Asp268 each contribute to the a divalent metal cation site. 2 residues coordinate NAD(+): Asp268 and Asn417.

The protein belongs to the malic enzymes family. Homotetramer. Mg(2+) serves as cofactor. The cofactor is Mn(2+).

The enzyme catalyses (S)-malate + NAD(+) = pyruvate + CO2 + NADH. The catalysed reaction is oxaloacetate + H(+) = pyruvate + CO2. The chain is NAD-dependent malic enzyme from Pseudomonas aeruginosa (strain UCBPP-PA14).